Reading from the N-terminus, the 116-residue chain is uncharacterized protein (116 aa).

Residues 1–46 (MGDNTTVAPGTNQTLVEEDLGAQITHTLMVQIMSKLNEMLTEYQPQ) lie on the Extracellular side of the membrane. N-linked (GlcNAc...) asparagine; by host glycosylation is found at asparagine 4 and asparagine 12. Residues 47–67 (IIGIGATVLAIFVIMFISLLI) traverse the membrane as a helical segment. At 68-116 (ILGCNCIRPYNFKNLKRYITGKASKSVEYQPLKMSAVNMGMDEDDEFLA) the chain is on the cytoplasmic side.

It is found in the host membrane. This is an uncharacterized protein from Magallana gigas (Pacific oyster).